We begin with the raw amino-acid sequence, 275 residues long: tRNA pseudouridine synthase A (275 aa).

The active-site Nucleophile is aspartate 56. Tyrosine 109 contributes to the substrate binding site.

This sequence belongs to the tRNA pseudouridine synthase TruA family.

The catalysed reaction is uridine(38/39/40) in tRNA = pseudouridine(38/39/40) in tRNA. In terms of biological role, formation of pseudouridine at positions 38, 39 and 40 in the anticodon stem and loop of transfer RNAs. The sequence is that of tRNA pseudouridine synthase A from Methanothermobacter thermautotrophicus (strain ATCC 29096 / DSM 1053 / JCM 10044 / NBRC 100330 / Delta H) (Methanobacterium thermoautotrophicum).